Consider the following 61-residue polypeptide: MDPNCSCPTGGSCSCAGSCTCKACRCPSCKKSCCSCCPVGCAKCAQGCVCKGASDKCSCCA.

At Met1 the chain carries N-acetylmethionine. Residues Met1–Cys29 form a beta region. The a divalent metal cation site is built by Cys5, Cys7, Cys13, Cys15, Cys19, Cys21, Cys24, Cys26, Cys29, Cys33, Cys34, Cys36, Cys37, Cys41, Cys44, Cys48, Cys50, and Cys57. Residues Lys30 to Ala61 are alpha. Residue Ser58 is modified to Phosphoserine. The a divalent metal cation site is built by Cys59 and Cys60.

This sequence belongs to the metallothionein superfamily. Type 1 family. In terms of assembly, monomer.

In terms of biological role, metallothioneins have a high content of cysteine residues that bind various heavy metals; these proteins are transcriptionally regulated by both heavy metals and glucocorticoids. The sequence is that of Metallothionein-1A (MT1A) from Bos taurus (Bovine).